The primary structure comprises 436 residues: Diaminobutyrate--2-oxoglutarate transaminase (436 aa).

The residue at position 269 (Lys269) is an N6-(pyridoxal phosphate)lysine.

The protein belongs to the class-III pyridoxal-phosphate-dependent aminotransferase family. It depends on pyridoxal 5'-phosphate as a cofactor.

The catalysed reaction is L-2,4-diaminobutanoate + 2-oxoglutarate = L-aspartate 4-semialdehyde + L-glutamate. It functions in the pathway amine and polyamine biosynthesis; ectoine biosynthesis; L-ectoine from L-aspartate 4-semialdehyde: step 1/3. Catalyzes reversively the conversion of L-aspartate beta-semialdehyde (ASA) to L-2,4-diaminobutyrate (DABA) by transamination with L-glutamate. The protein is Diaminobutyrate--2-oxoglutarate transaminase (ectB) of Nocardia farcinica (strain IFM 10152).